The chain runs to 430 residues: MRLNKGSIIEKMKNQNIKTQTELAEKIDISKSQLSFMFSDEYEPLKKNVIKLADVLKVSPNDIILDEEDQMPINSDFNRYDYKLDEFIDVSNVRKNKDYNVFETFAGAGGLALGLESAGLSTYGAVEIDKNAAETLRINRPKWKVIENDIEFIADNLDEFIDEEIDILSGGYPCQTFSYAGKRNGFADTRGTLFYPYSKILSKLKPKAFIAENVRGLVNHDDGKTLEVMLKVFIKEGYEVYWNILNSWNYDVAQKRERIVIIGIREDLVKEQKYPFRFPLAQVYKPVLKDVLKDVPKSKVTAYSDKKREVMKLVPPGGCWVDLPEQIAKDYMGKSWYSGGGKRGMARRISWDEPCLTLTTSPSQKQTERCHPDETRPFSIREYARIQSFPDEWEFSGGVGAQYRQIGNAVPVNLAKYIGKSLVHYLNQFN.

In terms of domain architecture, HTH cro/C1-type spans 9–63; sequence IEKMKNQNIKTQTELAEKIDISKSQLSFMFSDEYEPLKKNVIKLADVLKVSPNDI. The SAM-dependent MTase C5-type domain occupies 99–429; that stretch reads YNVFETFAGA…KSLVHYLNQF (331 aa). Cys174 is an active-site residue.

The protein belongs to the class I-like SAM-binding methyltransferase superfamily. C5-methyltransferase family.

It catalyses the reaction a 2'-deoxycytidine in DNA + S-adenosyl-L-methionine = a 5-methyl-2'-deoxycytidine in DNA + S-adenosyl-L-homocysteine + H(+). A methylase that recognizes the double-stranded sequence 5'-GGNCC-3', methylates C-4 on both strands, and protects the DNA from cleavage by the Sau96I endonuclease. In Staphylococcus aureus, this protein is Type II methyltransferase M.Sau96I.